We begin with the raw amino-acid sequence, 346 residues long: WD repeat-containing protein LWD1 (346 aa).

Position 1 is an N-acetylmethionine (methionine 1). WD repeat units lie at residues 79-121 (EHPY…SRVE), 133-173 (EFCG…VDTQ), 176-214 (AHDK…HSTI), and 265-305 (RHQA…QHVE).

Its subcellular location is the nucleus. Functionally, clock protein essential for the proper expression phase and period length of both the oscillator and output genes known to participate in photoperiod sensing. Required for the expression of APRR9, APRR7, and APRR5. Regulated by APRR9 and APRR7 at the transcriptional level, indicating the existence of a positive feedback loop within the circadian clock. May function to delay the expression of the morning genes until dawn approaches. In Arabidopsis thaliana (Mouse-ear cress), this protein is WD repeat-containing protein LWD1 (LWD1).